Reading from the N-terminus, the 355-residue chain is Cytoplasmic tRNA 2-thiolation protein 1 (355 aa).

The segment at 320–341 (GIGRPRGVNGDHNKETKKPGSV) is disordered. Residues 328–337 (NGDHNKETKK) are compositionally biased toward basic and acidic residues.

This sequence belongs to the TtcA family. CTU1/NCS6/ATPBD3 subfamily.

Its subcellular location is the cytoplasm. The protein operates within tRNA modification; 5-methoxycarbonylmethyl-2-thiouridine-tRNA biosynthesis. Its function is as follows. Plays a central role in 2-thiolation of mcm(5)S(2)U at tRNA wobble positions of tRNA(Lys), tRNA(Glu) and tRNA(Gln). Directly binds tRNAs and probably acts by catalyzing adenylation of tRNAs, an intermediate required for 2-thiolation. It is unclear whether it acts as a sulfurtransferase that transfers sulfur from thiocarboxylated URM1 onto the uridine of tRNAs at wobble position. In Arabidopsis thaliana (Mouse-ear cress), this protein is Cytoplasmic tRNA 2-thiolation protein 1.